Reading from the N-terminus, the 308-residue chain is Energy-coupling factor transporter ATP-binding protein EcfA2 (308 aa).

The region spanning 3–263 is the ABC transporter domain; the sequence is IEVKNISKVF…VDFLRENEME (261 aa). Position 40–47 (40–47) interacts with ATP; it reads GPTGSGKT.

This sequence belongs to the ABC transporter superfamily. Energy-coupling factor EcfA family. Forms a stable energy-coupling factor (ECF) transporter complex composed of 2 membrane-embedded substrate-binding proteins (S component), 2 ATP-binding proteins (A component) and 2 transmembrane proteins (T component).

Its subcellular location is the cell membrane. ATP-binding (A) component of a common energy-coupling factor (ECF) ABC-transporter complex. Unlike classic ABC transporters this ECF transporter provides the energy necessary to transport a number of different substrates. The polypeptide is Energy-coupling factor transporter ATP-binding protein EcfA2 (Mycoplasma mobile (strain ATCC 43663 / 163K / NCTC 11711) (Mesomycoplasma mobile)).